Consider the following 403-residue polypeptide: Phosphopentomutase (403 aa).

Residues Asp13, Asp298, His303, Asp339, His340, and His351 each contribute to the Mn(2+) site.

Belongs to the phosphopentomutase family. The cofactor is Mn(2+).

The protein localises to the cytoplasm. The enzyme catalyses 2-deoxy-alpha-D-ribose 1-phosphate = 2-deoxy-D-ribose 5-phosphate. It catalyses the reaction alpha-D-ribose 1-phosphate = D-ribose 5-phosphate. It participates in carbohydrate degradation; 2-deoxy-D-ribose 1-phosphate degradation; D-glyceraldehyde 3-phosphate and acetaldehyde from 2-deoxy-alpha-D-ribose 1-phosphate: step 1/2. Functionally, isomerase that catalyzes the conversion of deoxy-ribose 1-phosphate (dRib-1-P) and ribose 1-phosphate (Rib-1-P) to deoxy-ribose 5-phosphate (dRib-5-P) and ribose 5-phosphate (Rib-5-P), respectively. This chain is Phosphopentomutase, found in Streptococcus pyogenes serotype M18 (strain MGAS8232).